Reading from the N-terminus, the 160-residue chain is Arginine repressor (160 aa).

Belongs to the ArgR family.

The protein resides in the cytoplasm. The protein operates within amino-acid biosynthesis; L-arginine biosynthesis [regulation]. Regulates arginine biosynthesis genes. This is Arginine repressor from Anaeromyxobacter sp. (strain K).